Consider the following 349-residue polypeptide: DNA-directed RNA polymerase subunit Rpo1N (349 aa).

Residues 306 to 349 (EDEGEEFAGEQATNLSESADDRMDRDRPSSHGAAPIDVPEVGDD) form a disordered region. The segment covering 324-334 (ADDRMDRDRPS) has biased composition (basic and acidic residues).

This sequence belongs to the RNA polymerase beta' chain family. Part of the RNA polymerase complex.

The protein localises to the cytoplasm. It carries out the reaction RNA(n) + a ribonucleoside 5'-triphosphate = RNA(n+1) + diphosphate. DNA-dependent RNA polymerase (RNAP) catalyzes the transcription of DNA into RNA using the four ribonucleoside triphosphates as substrates. Forms the clamp head domain. The sequence is that of DNA-directed RNA polymerase subunit Rpo1N from Halococcus morrhuae (Micrococcus morrhuae).